Here is a 318-residue protein sequence, read N- to C-terminus: Retinol dehydrogenase 5 (318 aa).

Residues M1–R21 form a helical membrane-spanning segment. Residues Q22–K288 lie on the Lumenal side of the membrane. F32–L56 is an NADP(+) binding site. Residue N160 is glycosylated (N-linked (GlcNAc...) asparagine). Substrate is bound at residue S163. Y175 serves as the catalytic Proton acceptor. The helical transmembrane segment at L289 to V309 threads the bilayer. Residues L310 to Y318 are Cytoplasmic-facing.

Belongs to the short-chain dehydrogenases/reductases (SDR) family. As to quaternary structure, homodimer. As to expression, widely expressed. In the eye, abundant in the retinal pigment epithelium.

The protein localises to the endoplasmic reticulum membrane. It catalyses the reaction 11-cis-retinol + NAD(+) = 11-cis-retinal + NADH + H(+). It carries out the reaction 9-cis-retinol + NAD(+) = 9-cis-retinal + NADH + H(+). The enzyme catalyses 13-cis-retinol + NAD(+) = 13-cis-retinal + NADH + H(+). The catalysed reaction is androsterone + NAD(+) = 5alpha-androstan-3,17-dione + NADH + H(+). It catalyses the reaction 5alpha-androstane-3alpha,17beta-diol + NAD(+) = 17beta-hydroxy-5alpha-androstan-3-one + NADH + H(+). The protein operates within cofactor metabolism; retinol metabolism. With respect to regulation, inhibited by 9-cis-, 13-cis- and all-trans-retinoic acids, with the most potent inhibitor being 13-cis-retinoic acid. Weakly inhibited by oleic acid. Catalyzes the oxidation of cis-isomers of retinol, including 11-cis-, 9-cis-, and 13-cis-retinol in an NAD-dependent manner. Has no activity towards all-trans retinal. Plays a significant role in 11-cis retinol oxidation in the retinal pigment epithelium cells (RPE). Also recognizes steroids (androsterone, androstanediol) as its substrates. This is Retinol dehydrogenase 5 from Homo sapiens (Human).